The sequence spans 375 residues: Alpha-2,8-sialyltransferase 8B (375 aa).

Over 1–6 (MQLQFR) the chain is Cytoplasmic. A helical; Signal-anchor for type II membrane protein membrane pass occupies residues 7–23 (SWMLAALTLLVVFLIFA). Residues 24–375 (DISEIEEEIG…LTVGQCDGAT (352 aa)) are Lumenal-facing. 4 N-linked (GlcNAc...) asparagine glycosylation sites follow: Asn60, Asn72, Asn89, and Asn134. 2 cysteine pairs are disulfide-bonded: Cys157/Cys307 and Cys171/Cys371. Asn162 and Asn185 together coordinate CMP-N-acetyl-beta-neuraminate. N-linked (GlcNAc...) asparagine glycosylation is found at Asn219 and Asn234. CMP-N-acetyl-beta-neuraminate contacts are provided by Thr294, Thr295, Gly296, Trp316, Tyr329, and His330. The active-site Proton donor/acceptor is His346.

Belongs to the glycosyltransferase 29 family. In terms of processing, autopolysialylated. Autopolysialylation is not a prerequisite for the polysialylation acitity, but enhances the polysialylation acitity. As to expression, expressed only in newborn brain.

The protein localises to the golgi apparatus membrane. Its subcellular location is the secreted. It localises to the cell membrane. The catalysed reaction is [N-acetyl-alpha-D-neuraminosyl-(2-&gt;8)](n) + CMP-N-acetyl-beta-neuraminate = [N-acetyl-alpha-D-neuraminosyl-(2-&gt;8)](n+1) + CMP + H(+). Its pathway is protein modification; protein glycosylation. Catalyzes the transfer of a sialic acid from a CMP-linked sialic acid donor onto a terminal alpha-2,3-, alpha-2,6-, or alpha-2,8-linked sialic acid of an N-linked glycan acceptor through alpha-2,8-linkages. Therefore, participates in polysialic acid synthesis on various sialylated N-acetyllactosaminyl oligosaccharides (alpha-2,3-, alpha-2,6-, or alpha-2,8-linked sialic acid), including NCAM1, NCAM1 N-glycans, FETUB N-glycans, and to a lesser extent sialylparagloboside (SPG) and AHSG, which does not require the initial addition of an alpha 2,8-sialic acid. However, does not exhibit sialic acid-polymerase activity. Catalyzes polysialic acid synthesis in the hippocampal on NCAM1 and supports neurite outgrowth. ST8SIA2-mediated polysialylation influences on oligodendrocyte differentiation and may promote the integrity of myelin and axons. The chain is Alpha-2,8-sialyltransferase 8B from Rattus norvegicus (Rat).